The primary structure comprises 197 residues: Small ribosomal subunit protein uS2 (197 aa).

Belongs to the universal ribosomal protein uS2 family.

The polypeptide is Small ribosomal subunit protein uS2 (rps2) (Archaeoglobus fulgidus (strain ATCC 49558 / DSM 4304 / JCM 9628 / NBRC 100126 / VC-16)).